The following is a 158-amino-acid chain: Transcriptional repressor NrdR (158 aa).

The disordered stretch occupies residues 1 to 22 (MRCPYCGSEDTQVKDSRPAEDN). A zinc finger spans residues 3-34 (CPYCGSEDTQVKDSRPAEDNTSIRRRRICPDC). Basic and acidic residues predominate over residues 11-22 (TQVKDSRPAEDN). Positions 49–139 (LMVIKKTGRK…VYRDFSHAED (91 aa)) constitute an ATP-cone domain.

The protein belongs to the NrdR family. Zn(2+) is required as a cofactor.

In terms of biological role, negatively regulates transcription of bacterial ribonucleotide reductase nrd genes and operons by binding to NrdR-boxes. The chain is Transcriptional repressor NrdR from Rhizobium rhizogenes (strain K84 / ATCC BAA-868) (Agrobacterium radiobacter).